The primary structure comprises 603 residues: UvrABC system protein C (603 aa).

The GIY-YIG domain maps to 15–92 (DQPGCYLMKN…IQKHQPYYNI (78 aa)). A UVR domain is found at 197 to 232 (AQVKKQLTARMERAAGQLEFERAAEIRDQLHYIEVT).

This sequence belongs to the UvrC family. As to quaternary structure, interacts with UvrB in an incision complex.

It is found in the cytoplasm. In terms of biological role, the UvrABC repair system catalyzes the recognition and processing of DNA lesions. UvrC both incises the 5' and 3' sides of the lesion. The N-terminal half is responsible for the 3' incision and the C-terminal half is responsible for the 5' incision. The protein is UvrABC system protein C of Limosilactobacillus fermentum (strain NBRC 3956 / LMG 18251) (Lactobacillus fermentum).